Here is a 207-residue protein sequence, read N- to C-terminus: Fibronectin type III domain-containing protein 5b (207 aa).

A signal peptide spans 1 to 26 (MWGIKGSFAVLLLLFLAYIFASSVNA). The Extracellular segment spans residues 27–146 (DSLSAPLNVT…EEVGQAAQLR (120 aa)). The Fibronectin type-III domain maps to 31–122 (APLNVTIKAL…EPVLFRTPKE (92 aa)). N-linked (GlcNAc...) asparagine glycosylation is found at N34 and N79. Residues 147–167 (AGELIIIVVVLVMWAGVIALF) traverse the membrane as a helical segment. Topologically, residues 168-207 (CRQYDIIKDNEPNNNKDKAKNSSECSTPEHPTGGLLRSKV) are cytoplasmic. Residues 178–188 (EPNNNKDKAKN) show a composition bias toward basic and acidic residues. Residues 178 to 207 (EPNNNKDKAKNSSECSTPEHPTGGLLRSKV) are disordered. The short motif at 205-207 (SKV) is the Microbody targeting signal element.

Dimer; may exist in other oligomeric forms. Post-translationally, the extracellular domain is cleaved and released from the cell membrane.

The protein localises to the cell membrane. It localises to the peroxisome membrane. The protein resides in the secreted. May mediate beneficial effects of muscular exercise. This chain is Fibronectin type III domain-containing protein 5b (fndc5b), found in Danio rerio (Zebrafish).